The sequence spans 189 residues: dTTP/UTP pyrophosphatase (189 aa).

Asp-70 functions as the Proton acceptor in the catalytic mechanism.

Belongs to the Maf family. YhdE subfamily. It depends on a divalent metal cation as a cofactor.

It is found in the cytoplasm. It catalyses the reaction dTTP + H2O = dTMP + diphosphate + H(+). The enzyme catalyses UTP + H2O = UMP + diphosphate + H(+). Its function is as follows. Nucleoside triphosphate pyrophosphatase that hydrolyzes dTTP and UTP. May have a dual role in cell division arrest and in preventing the incorporation of modified nucleotides into cellular nucleic acids. This is dTTP/UTP pyrophosphatase from Akkermansia muciniphila (strain ATCC BAA-835 / DSM 22959 / JCM 33894 / BCRC 81048 / CCUG 64013 / CIP 107961 / Muc).